Consider the following 676-residue polypeptide: MAPFLRIAFNSYELGSLQAEDEANQPFCAVKMKEALSTERGKTLVQKKPTMYPEWKSTFDAHIYEGRVIQIVLMRAAEEPVSEVTVGVSVLAERCKKNNGKAEFWLDLQPQAKVLMSVQYFLEDVDCKQSMRSEDEAKFPTMNRRGAIKQAKIHYIKNHEFIATFFGQPTFCSVCKDFVWGLNKQGYKCRQCNAAIHKKCIDKIIGRCTGTAANSRDTIFQKERFNIDMPHRFKVHNYMSPTFCDHCGSLLWGLVKQGLKCEDCGMNVHHKCREKVANLCGINQKLLAEALNQVTQRASRRSDSASSEPVGIYQGFEKKTGVAGEDMQDNSGTYGKIWEGSSKCNINNFIFHKVLGKGSFGKVLLGELKGRGEYFAIKALKKDVVLIDDDVECTMVEKRVLTLAAENPFLTHLICTFQTKDHLFFVMEFLNGGDLMYHIQDKGRFELYRATFYAAEIMCGLQFLHSKGIIYRDLKLDNVLLDRDGHIKIADFGMCKENIFGESRASTFCGTPDYIAPEILQGLKYTFSVDWWSFGVLLYEMLIGQSPFHGDDEDELFESIRVDTPHYPRWITKESKDILEKLFEREPTKRLGVTGNIKIHPFFKTINWTLLEKRRLEPPFRPKVKSPRDYSNFDQEFLNEKARLSYSDKNLIDSMDQSAFAGFSFVNPKFEHLLED.

The C2 domain maps to 1 to 106 (MAPFLRIAFN…KNNGKAEFWL (106 aa)). Phosphothreonine occurs at positions 43 and 50. Tyr64 is subject to Phosphotyrosine. Ser130 is modified (phosphoserine). The residue at position 141 (Thr141) is a Phosphothreonine. Tyr155 bears the Phosphotyrosine mark. The segment at 158–208 (NHEFIATFFGQPTFCSVCKDFVWGLNKQGYKCRQCNAAIHKKCIDKIIGRC) adopts a Phorbol-ester/DAG-type 1 zinc-finger fold. A Phosphothreonine modification is found at Thr218. The segment at 230 to 280 (PHRFKVHNYMSPTFCDHCGSLLWGLVKQGLKCEDCGMNVHHKCREKVANLC) adopts a Phorbol-ester/DAG-type 2 zinc-finger fold. Ser299, Ser302, and Ser304 each carry phosphoserine; by autocatalysis. At Ser307 the chain carries Phosphoserine. Position 313 is a phosphotyrosine (Tyr313). Tyr334 bears the Phosphotyrosine; by SRC mark. One can recognise a Protein kinase domain in the interval 349 to 603 (FIFHKVLGKG…TGNIKIHPFF (255 aa)). ATP is bound at residue 355–363 (LGKGSFGKV). The residue at position 374 (Tyr374) is a Phosphotyrosine. Residue Lys378 coordinates ATP. The residue at position 451 (Thr451) is a Phosphothreonine. Asp473 serves as the catalytic Proton acceptor. A phosphoserine mark is found at Ser503 and Ser506. At Thr507 the chain carries Phosphothreonine; by autocatalysis. Position 567 is a phosphotyrosine (Tyr567). One can recognise an AGC-kinase C-terminal domain in the interval 604–675 (KTINWTLLEK…VNPKFEHLLE (72 aa)). A phosphoserine mark is found at Ser645, Ser654, Ser658, and Ser664.

It belongs to the protein kinase superfamily. AGC Ser/Thr protein kinase family. PKC subfamily. Interacts with PDPK1 (via N-terminal region). Interacts with RAD9A. Interacts with CDCP1. Interacts with MUC1. Interacts with VASP. Interacts with CAVIN3. Interacts with PRKD2 (via N-terminus and zing-finger domain 1 and 2) in response to oxidative stress; the interaction is independent of PRKD2 tyrosine phosphorylation. Interacts with PLSC3; interaction is enhanced by UV irradiation. Interacts with PRKCH upstream open reading frame 2; the interaction leads to inhibition of kinase activity. In terms of processing, autophosphorylated and/or phosphorylated at Thr-507, within the activation loop; phosphorylation at Thr-507 is not a prerequisite for enzymatic activity. Autophosphorylated at Ser-299, Ser-302 and Ser-304. Upon TNFSF10/TRAIL treatment, phosphorylated at Tyr-155; phosphorylation is required for its translocation to the endoplasmic reticulum and cleavage by caspase-3. Phosphorylated at Tyr-313, Tyr-334 and Tyr-567; phosphorylation of Tyr-313 and Tyr-567 following thrombin or zymosan stimulation potentiates its kinase activity. Phosphorylated by protein kinase PDPK1; phosphorylation is inhibited by the apoptotic C-terminal cleavage product of PKN2. Phosphorylated at Tyr-313 through a SYK and SRC mechanism downstream of C-type lectin receptors activation, promoting its activation. Post-translationally, proteolytically cleaved into a catalytic subunit and a regulatory subunit by caspase-3 during apoptosis which results in kinase activation.

The protein localises to the cytoplasm. It localises to the perinuclear region. The protein resides in the nucleus. Its subcellular location is the cell membrane. It is found in the mitochondrion. The protein localises to the endomembrane system. It catalyses the reaction L-seryl-[protein] + ATP = O-phospho-L-seryl-[protein] + ADP + H(+). It carries out the reaction L-threonyl-[protein] + ATP = O-phospho-L-threonyl-[protein] + ADP + H(+). The catalysed reaction is L-tyrosyl-[protein] + ATP = O-phospho-L-tyrosyl-[protein] + ADP + H(+). Its activity is regulated as follows. Novel PKCs (PRKCD, PRKCE, PRKCH and PRKCQ) are calcium-insensitive, but activated by diacylglycerol (DAG) and phosphatidylserine. Three specific sites; Thr-507 (activation loop of the kinase domain), Ser-645 (turn motif) and Ser-664 (hydrophobic region), need to be phosphorylated for its full activation. Activated by caspase-3 (CASP3) cleavage during apoptosis. After cleavage, the pseudosubstrate motif in the regulatory subunit is released from the substrate recognition site of the catalytic subunit, which enables PRKCD to become constitutively activated. The catalytic subunit which displays properties of a sphingosine-dependent protein kinase is activated by D-erythro-sphingosine (Sph) or N,N-dimethyl-D-erythrosphingosine (DMS) or N,N,N-trimethyl-D-erythrosphingosine (TMS), but not by ceramide or Sph-1-P and is strongly inhibited by phosphatidylserine. Inhibited by PRKCH upstream open reading frame 2. Its function is as follows. Calcium-independent, phospholipid- and diacylglycerol (DAG)-dependent serine/threonine-protein kinase that plays contrasting roles in cell death and cell survival by functioning as a pro-apoptotic protein during DNA damage-induced apoptosis, but acting as an anti-apoptotic protein during cytokine receptor-initiated cell death, is involved in tumor suppression as well as survival of several cancers, is required for oxygen radical production by NADPH oxidase and acts as positive or negative regulator in platelet functional responses. Negatively regulates B cell proliferation and also has an important function in self-antigen induced B cell tolerance induction. Upon DNA damage, activates the promoter of the death-promoting transcription factor BCLAF1/Btf to trigger BCLAF1-mediated p53/TP53 gene transcription and apoptosis. In response to oxidative stress, interact with and activate CHUK/IKKA in the nucleus, causing the phosphorylation of p53/TP53. In the case of ER stress or DNA damage-induced apoptosis, can form a complex with the tyrosine-protein kinase ABL1 which trigger apoptosis independently of p53/TP53. In cytosol can trigger apoptosis by activating MAPK11 or MAPK14, inhibiting AKT1 and decreasing the level of X-linked inhibitor of apoptosis protein (XIAP), whereas in nucleus induces apoptosis via the activation of MAPK8 or MAPK9. Upon ionizing radiation treatment, is required for the activation of the apoptosis regulators BAX and BAK, which trigger the mitochondrial cell death pathway. Can phosphorylate MCL1 and target it for degradation which is sufficient to trigger for BAX activation and apoptosis. Is required for the control of cell cycle progression both at G1/S and G2/M phases. Mediates phorbol 12-myristate 13-acetate (PMA)-induced inhibition of cell cycle progression at G1/S phase by up-regulating the CDK inhibitor CDKN1A/p21 and inhibiting the cyclin CCNA2 promoter activity. In response to UV irradiation can phosphorylate CDK1, which is important for the G2/M DNA damage checkpoint activation. Can protect glioma cells from the apoptosis induced by TNFSF10/TRAIL, probably by inducing increased phosphorylation and subsequent activation of AKT1. Is highly expressed in a number of cancer cells and promotes cell survival and resistance against chemotherapeutic drugs by inducing cyclin D1 (CCND1) and hyperphosphorylation of RB1, and via several pro-survival pathways, including NF-kappa-B, AKT1 and MAPK1/3 (ERK1/2). Involved in antifungal immunity by mediating phosphorylation and activation of CARD9 downstream of C-type lectin receptors activation, promoting interaction between CARD9 and BCL10, followed by activation of NF-kappa-B and MAP kinase p38 pathways. Can also act as tumor suppressor upon mitogenic stimulation with PMA or TPA. In N-formyl-methionyl-leucyl-phenylalanine (fMLP)-treated cells, is required for NCF1 (p47-phox) phosphorylation and activation of NADPH oxidase activity, and regulates TNF-elicited superoxide anion production in neutrophils, by direct phosphorylation and activation of NCF1 or indirectly through MAPK1/3 (ERK1/2) signaling pathways. May also play a role in the regulation of NADPH oxidase activity in eosinophil after stimulation with IL5, leukotriene B4 or PMA. In collagen-induced platelet aggregation, acts a negative regulator of filopodia formation and actin polymerization by interacting with and negatively regulating VASP phosphorylation. Downstream of PAR1, PAR4 and CD36/GP4 receptors, regulates differentially platelet dense granule secretion; acts as a positive regulator in PAR-mediated granule secretion, whereas it negatively regulates CD36/GP4-mediated granule release. Phosphorylates MUC1 in the C-terminal and regulates the interaction between MUC1 and beta-catenin. The catalytic subunit phosphorylates 14-3-3 proteins (YWHAB, YWHAZ and YWHAH) in a sphingosine-dependent fashion. Phosphorylates ELAVL1 in response to angiotensin-2 treatment. Phosphorylates mitochondrial phospholipid scramblase 3 (PLSCR3), resulting in increased cardiolipin expression on the mitochondrial outer membrane which facilitates apoptosis. Phosphorylates SMPD1 which induces SMPD1 secretion. In Homo sapiens (Human), this protein is Protein kinase C delta type.